The following is a 685-amino-acid chain: Tyrosinase (685 aa).

Serine 2 is modified (N-acetylserine). Cu cation is bound by residues histidine 67, histidine 97, histidine 106, histidine 278, histidine 282, and histidine 307. The 2'-(S-cysteinyl)-histidine (Cys-His) cross-link spans cysteine 95–histidine 97. The propeptide at alanine 409–isoleucine 685 is could be involved in enzyme activation.

It belongs to the tyrosinase family. Cu(2+) serves as cofactor.

The enzyme catalyses 2 L-dopa + O2 = 2 L-dopaquinone + 2 H2O. The catalysed reaction is L-tyrosine + O2 = L-dopaquinone + H2O. Its function is as follows. This is a copper-containing oxidase that functions in the formation of pigments such as melanins and other polyphenolic compounds. The polypeptide is Tyrosinase (T) (Neurospora crassa (strain ATCC 24698 / 74-OR23-1A / CBS 708.71 / DSM 1257 / FGSC 987)).